The sequence spans 350 residues: NADH-quinone oxidoreductase subunit H (350 aa).

Helical transmembrane passes span leucine 31–isoleucine 51, leucine 102–glycine 122, leucine 132–glycine 152, methionine 171–serine 191, tryptophan 205–phenylalanine 225, phenylalanine 263–glycine 283, phenylalanine 286–tryptophan 306, and phenylalanine 322–leucine 342.

The protein belongs to the complex I subunit 1 family. As to quaternary structure, NDH-1 is composed of 14 different subunits. Subunits NuoA, H, J, K, L, M, N constitute the membrane sector of the complex.

The protein localises to the cell membrane. It catalyses the reaction a quinone + NADH + 5 H(+)(in) = a quinol + NAD(+) + 4 H(+)(out). Its function is as follows. NDH-1 shuttles electrons from NADH, via FMN and iron-sulfur (Fe-S) centers, to quinones in the respiratory chain. The immediate electron acceptor for the enzyme in this species is believed to be ubiquinone. Couples the redox reaction to proton translocation (for every two electrons transferred, four hydrogen ions are translocated across the cytoplasmic membrane), and thus conserves the redox energy in a proton gradient. This subunit may bind ubiquinone. The protein is NADH-quinone oxidoreductase subunit H of Carboxydothermus hydrogenoformans (strain ATCC BAA-161 / DSM 6008 / Z-2901).